A 106-amino-acid polypeptide reads, in one-letter code: MTKVLVVVALLVTLISYSSSEGIDDLEADELLSLMANEQTRAKACTPRYYDCSHDRHSCCRSSMFKDVCTCFYPEGGDNKEVCTCQQPKHLKYMEKATDKIKNLFG.

An N-terminal signal peptide occupies residues 1 to 20 (MTKVLVVVALLVTLISYSSS). A propeptide spanning residues 21–41 (EGIDDLEADELLSLMANEQTR) is cleaved from the precursor. 4 disulfides stabilise this stretch: Cys45-Cys60, Cys52-Cys69, Cys59-Cys85, and Cys71-Cys83.

Belongs to the neurotoxin 19 (CSTX) family. 02 (D7) subfamily. As to expression, expressed by the venom gland.

It localises to the secreted. This chain is Toxin-like structure LSTX-D8, found in Lycosa singoriensis (Wolf spider).